A 146-amino-acid chain; its full sequence is Hemoglobin subunit beta (146 aa).

V1 carries the N-acetylvaline modification. In terms of domain architecture, Globin spans 2-146; sequence HLTPEEKALV…VANALAHKYH (145 aa). An N6-acetyllysine modification is found at K59. H63 serves as a coordination point for heme b. N6-acetyllysine is present on K82. Residue H92 coordinates heme b. C93 carries the post-translational modification S-nitrosocysteine. N6-acetyllysine is present on K144.

This sequence belongs to the globin family. Heterotetramer of two alpha chains and two beta chains. As to expression, red blood cells.

Involved in oxygen transport from the lung to the various peripheral tissues. This chain is Hemoglobin subunit beta (HBB), found in Trichechus inunguis (Amazon manatee).